The primary structure comprises 485 residues: Serine/threonine-protein kinase 4 (485 aa).

Positions phenylalanine 30–isoleucine 281 constitute a Protein kinase domain. ATP-binding positions include leucine 36 to valine 44 and lysine 59. Residue aspartate 149 is the Proton acceptor of the active site. Threonine 183 carries the phosphothreonine; by autocatalysis modification. Positions glutamate 287–glutamate 313 form a coiled coil. One can recognise an SARAH domain in the interval tyrosine 431–lysine 478.

This sequence belongs to the protein kinase superfamily. STE Ser/Thr protein kinase family. STE20 subfamily. In terms of assembly, homodimer; mediated via the coiled-coil region. Mg(2+) is required as a cofactor. Post-translationally, autophosphorylated on Thr-183. Proteolytically cleaved by caspase-3 during apoptosis at Asp-326 resulting in a 37 kDa form. Proteolytic cleavage results in kinase activation and nuclear translocation of the truncated form (MST1/N).

It localises to the cytoplasm. It is found in the nucleus. It carries out the reaction L-seryl-[protein] + ATP = O-phospho-L-seryl-[protein] + ADP + H(+). The catalysed reaction is L-threonyl-[protein] + ATP = O-phospho-L-threonyl-[protein] + ADP + H(+). With respect to regulation, the C-terminal non-catalytic region inhibits the kinase activity, the enzyme is activated by caspase-cleavage. Homodimerization and autophosphorylation of Thr-183 is also required for full activation. Stress-activated, pro-apoptotic kinase which, following caspase-cleavage, enters the nucleus and induces chromatin condensation followed by internucleosomal DNA fragmentation. Key component of the Hippo signaling pathway which plays a pivotal role in organ size control and tumor suppression by restricting proliferation and promoting apoptosis. The core of this pathway is composed of a kinase cascade wherein stk3/mst2 and stk4/mst1, in complex with its regulatory protein sav1, phosphorylates and activates lats1/2 in complex with its regulatory protein mob1, which in turn phosphorylates and inactivates yap1 oncoprotein and wwtr1/taz. Phosphorylation of yap1 by lats2 inhibits its translocation into the nucleus to regulate cellular genes important for cell proliferation, cell death, and cell migration. Phosphorylates 'Ser-14' of histone H2B (H2BS14ph) during apoptosis. This is Serine/threonine-protein kinase 4 (stk4) from Xenopus tropicalis (Western clawed frog).